Reading from the N-terminus, the 375-residue chain is Alanine racemase (375 aa).

Lys-35 functions as the Proton acceptor; specific for D-alanine in the catalytic mechanism. Lys-35 bears the N6-(pyridoxal phosphate)lysine mark. Arg-130 serves as a coordination point for substrate. Tyr-253 acts as the Proton acceptor; specific for L-alanine in catalysis. A substrate-binding site is contributed by Met-305.

It belongs to the alanine racemase family. The cofactor is pyridoxal 5'-phosphate.

The catalysed reaction is L-alanine = D-alanine. It participates in amino-acid biosynthesis; D-alanine biosynthesis; D-alanine from L-alanine: step 1/1. Its function is as follows. Catalyzes the interconversion of L-alanine and D-alanine. May also act on other amino acids. The sequence is that of Alanine racemase (alr) from Ralstonia nicotianae (strain ATCC BAA-1114 / GMI1000) (Ralstonia solanacearum).